We begin with the raw amino-acid sequence, 525 residues long: GMP synthase [glutamine-hydrolyzing] (525 aa).

In terms of domain architecture, Glutamine amidotransferase type-1 spans 9 to 207; that stretch reads RILILDFGSQ…VHEICGCPAD (199 aa). Cysteine 86 acts as the Nucleophile in catalysis. Active-site residues include histidine 181 and glutamate 183. The 193-residue stretch at 208–400 folds into the GMPS ATP-PPase domain; sequence WTPGNIVDDL…LGLPADMVYR (193 aa). 235–241 serves as a coordination point for ATP; that stretch reads SGGVDSS.

In terms of assembly, homodimer.

It carries out the reaction XMP + L-glutamine + ATP + H2O = GMP + L-glutamate + AMP + diphosphate + 2 H(+). Its pathway is purine metabolism; GMP biosynthesis; GMP from XMP (L-Gln route): step 1/1. Catalyzes the synthesis of GMP from XMP. The chain is GMP synthase [glutamine-hydrolyzing] from Alkalilimnicola ehrlichii (strain ATCC BAA-1101 / DSM 17681 / MLHE-1).